The sequence spans 277 residues: MPRLHDHFWSCSCAHSARRRGPPRASAAGLAAKVGEMINVSVSGPSLLAAHGAPDADPAPRGRSAAMSGPEPGSPYPNTWHHRLLQRSLVLFSVGVVLALVLNLLQIQRNVTLFPEEVIATIFSSAWWVPPCCGTAAAVVGLLYPCIDSHLGEPHKFKREWASVMRCIAVFVGINHASAKLDFANNVQLSLTLAALSLGLWWTFDRSRSGLGLGITIAFLATLITQFLVYNGVYQYTSPDFLYIRSWLPCIFFSGGVTVGNIGRQLAMGVPEKPHSD.

Topologically, residues 1–84 (MPRLHDHFWS…PYPNTWHHRL (84 aa)) are cytoplasmic. A compositionally biased stretch (low complexity) spans 51 to 66 (HGAPDADPAPRGRSAA). A disordered region spans residues 51–73 (HGAPDADPAPRGRSAAMSGPEPG). The helical transmembrane segment at 85-107 (LQRSLVLFSVGVVLALVLNLLQI) threads the bilayer. Residues 108 to 126 (QRNVTLFPEEVIATIFSSA) are Lumenal-facing. Residues 127-144 (WWVPPCCGTAAAVVGLLY) form a helical membrane-spanning segment. The Cytoplasmic segment spans residues 145–159 (PCIDSHLGEPHKFKR). Residues lysine 156 and lysine 158 each participate in a glycyl lysine isopeptide (Lys-Gly) (interchain with G-Cter in ubiquitin) cross-link. The helical transmembrane segment at 160-182 (EWASVMRCIAVFVGINHASAKLD) threads the bilayer. Residues 183–185 (FAN) lie on the Lumenal side of the membrane. The helical transmembrane segment at 186–204 (NVQLSLTLAALSLGLWWTF) threads the bilayer. The Cytoplasmic segment spans residues 205–209 (DRSRS). A Phosphoserine; by PCK1 modification is found at serine 207. The helical transmembrane segment at 210 to 231 (GLGLGITIAFLATLITQFLVYN) threads the bilayer. At 232–245 (GVYQYTSPDFLYIR) the chain is on the lumenal side. The helical transmembrane segment at 246–263 (SWLPCIFFSGGVTVGNIG) threads the bilayer. At 264 to 277 (RQLAMGVPEKPHSD) the chain is on the cytoplasmic side. The KxHxx motif lies at 271–277 (PEKPHSD).

It belongs to the INSIG family. In terms of assembly, interacts with SCAP; interaction is direct and only takes place in the presence of sterols; it prevents interaction between SCAP and the coat protein complex II (COPII). Associates with the SCAP-SREBP complex (composed of SCAP and SREBF1/SREBP1 or SREBF2/SREBP2); association is mediated via its interaction with SCAP and only takes place in the presence of sterols. Interaction with SCAP is mutually exclusive with PAQR3. Interacts with HMGCR (via its SSD); the interaction, accelerated by sterols, leads to the recruitment of HMGCR to AMFR/gp78 for its ubiquitination by the sterol-mediated ERAD pathway. Interacts with AMFR/gp78 (via its membrane domain); the interaction recruits HMCR at the ER membrane for its ubiquitination and degradation by the sterol-mediated ERAD pathway. Interacts with SOAT2/ACAT2; leading to promote recruitment of AMFR/gp78 and subsequent ubiquitination of SOAT2/ACAT2. Interacts with RNF139. Interacts with RNF145. Post-translationally, phosphorylation at Ser-207 by PCK1 reduces binding to oxysterol, disrupting the interaction between INSIG1 and SCAP, thereby promoting nuclear translocation of SREBP proteins (SREBF1/SREBP1 or SREBF2/SREBP2) and subsequent transcription of downstream lipogenesis-related genes. Ubiquitinated by AMFR/gp78 in response to sterol deprivation, leading to its degradation: when the SCAP-SREBP complex becomes dissociated from INSIG1, INSIG1 is then ubiquitinated and degraded in proteasomes. Although ubiquitination is required for rapid INSIG1 degradation, it is not required for release of the SCAP-SREBP complex. Ubiquitinated by RNF139. As to expression, expressed in all tissues tested with highest expression in the liver.

The protein resides in the endoplasmic reticulum membrane. Oxysterol-binding protein that mediates feedback control of cholesterol synthesis by controlling both endoplasmic reticulum to Golgi transport of SCAP and degradation of HMGCR. Acts as a negative regulator of cholesterol biosynthesis by mediating the retention of the SCAP-SREBP complex in the endoplasmic reticulum, thereby blocking the processing of sterol regulatory element-binding proteins (SREBPs) SREBF1/SREBP1 and SREBF2/SREBP2. Binds oxysterol, including 25-hydroxycholesterol, regulating interaction with SCAP and retention of the SCAP-SREBP complex in the endoplasmic reticulum. In presence of oxysterol, interacts with SCAP, retaining the SCAP-SREBP complex in the endoplasmic reticulum, thereby preventing SCAP from escorting SREBF1/SREBP1 and SREBF2/SREBP2 to the Golgi. Sterol deprivation or phosphorylation by PCK1 reduce oxysterol-binding, disrupting the interaction between INSIG1 and SCAP, thereby promoting Golgi transport of the SCAP-SREBP complex, followed by processing and nuclear translocation of SREBF1/SREBP1 and SREBF2/SREBP2. Also regulates cholesterol synthesis by regulating degradation of HMGCR: initiates the sterol-mediated ubiquitin-mediated endoplasmic reticulum-associated degradation (ERAD) of HMGCR via recruitment of the reductase to the ubiquitin ligases AMFR/gp78 and/or RNF139. Also regulates degradation of SOAT2/ACAT2 when the lipid levels are low: initiates the ubiquitin-mediated degradation of SOAT2/ACAT2 via recruitment of the ubiquitin ligases AMFR/gp78. This Homo sapiens (Human) protein is Insulin-induced gene 1 protein.